Here is a 196-residue protein sequence, read N- to C-terminus: DNA polymerase epsilon subunit D (196 aa).

Residues 125-196 (RKKEKLDSGE…ETRVQNLEQT (72 aa)) are disordered. Over residues 133-143 (GEVDADGDIDM) the composition is skewed to acidic residues. The segment covering 144 to 159 (GEDKENVPVEKVKEHD) has biased composition (basic and acidic residues). Residues 160-173 (EIEEQGDALQDVEE) show a composition bias toward acidic residues. Residues 174–188 (SSEKKQKTESQDVET) show a composition bias toward basic and acidic residues. The residue at position 183 (Ser-183) is a Phosphoserine; by ATM or ATR.

DNA polymerase epsilon is a heterotetramer consisting of POL2, DPB2, DPB3 and DPB4. Component of the ISW2 complex, which at least consists of ISW2, ITC1, DLS1 and DPB4.

The protein localises to the nucleus. As accessory component of the DNA polymerase epsilon (DNA polymerase II) participates in chromosomal DNA replication. It is required during synthesis of the leading and lagging DNA strands at the replication fork and binds at/or near replication origins and moves along DNA with the replication fork. It has 3'-5' proofreading exonuclease activity that correct errors arising during DNA replication. It is also involved in DNA synthesis during DNA repair. Also functions as a component of the ISW2 complex, which acts in remodeling the chromatin by catalyzing an ATP-dependent alteration in the structure of nucleosomal DNA. The ISW2 complex is involved in coordinating transcriptional repression and in inheritance of telomeric silencing. It is involved in repression of MAT a-specific genes, INO1, and early meiotic genes during mitotic growth dependent upon transcription factor UME6 and in a parallel pathway to the RPD3-SIN3 histone deacetylase complex. The chain is DNA polymerase epsilon subunit D (DPB4) from Saccharomyces cerevisiae (strain ATCC 204508 / S288c) (Baker's yeast).